The sequence spans 240 residues: UDP-2,3-diacylglucosamine hydrolase (240 aa).

Mn(2+)-binding residues include aspartate 8, histidine 10, aspartate 41, asparagine 79, and histidine 114. Position 79 to 80 (79 to 80) interacts with substrate; sequence NR. 5 residues coordinate substrate: aspartate 122, serine 160, threonine 164, lysine 167, and histidine 195. Mn(2+) contacts are provided by histidine 195 and histidine 197.

It belongs to the LpxH family. The cofactor is Mn(2+).

The protein localises to the cell inner membrane. The catalysed reaction is UDP-2-N,3-O-bis[(3R)-3-hydroxytetradecanoyl]-alpha-D-glucosamine + H2O = 2-N,3-O-bis[(3R)-3-hydroxytetradecanoyl]-alpha-D-glucosaminyl 1-phosphate + UMP + 2 H(+). It functions in the pathway glycolipid biosynthesis; lipid IV(A) biosynthesis; lipid IV(A) from (3R)-3-hydroxytetradecanoyl-[acyl-carrier-protein] and UDP-N-acetyl-alpha-D-glucosamine: step 4/6. Its function is as follows. Hydrolyzes the pyrophosphate bond of UDP-2,3-diacylglucosamine to yield 2,3-diacylglucosamine 1-phosphate (lipid X) and UMP by catalyzing the attack of water at the alpha-P atom. Involved in the biosynthesis of lipid A, a phosphorylated glycolipid that anchors the lipopolysaccharide to the outer membrane of the cell. This is UDP-2,3-diacylglucosamine hydrolase from Pseudomonas paraeruginosa (strain DSM 24068 / PA7) (Pseudomonas aeruginosa (strain PA7)).